We begin with the raw amino-acid sequence, 484 residues long: Cobyric acid synthase (484 aa).

Positions 248–435 (VLKVIVPVLP…LHGLFEGSQS (188 aa)) constitute a GATase cobBQ-type domain. The Nucleophile role is filled by C329. The active site involves H427.

Belongs to the CobB/CobQ family. CobQ subfamily.

It functions in the pathway cofactor biosynthesis; adenosylcobalamin biosynthesis. Its function is as follows. Catalyzes amidations at positions B, D, E, and G on adenosylcobyrinic A,C-diamide. NH(2) groups are provided by glutamine, and one molecule of ATP is hydrogenolyzed for each amidation. The polypeptide is Cobyric acid synthase (Pseudomonas putida (strain GB-1)).